A 225-amino-acid chain; its full sequence is MSKNNSTVIKMDEQVLKYKEDLYEKTVHHLKVTIPKKIAEYQELAKSYGQNSENEQDGQTSKKRKLDSEDYVLMPIEDLIKTNRVIMETHQKFKKAYIELIETFSVIRGWISLNIPRIEDGNNFGVDVQEDIITQITKLEEVYTSLLDGSESYFASRASLVKKILKHKDIEAYRYSLAQVDEKEFTRFSFSYFDLANNYATTYSLIVKNFAKLETPRPTNASNIY.

This sequence belongs to the PA28 family. In terms of assembly, homoheptamer. The homoheptamer associates with the 20S proteasome.

It is found in the nucleus. Functionally, subunit of the 11S REG (also called PA28) proteasome regulator, a doughnut-shaped homoheptamer which associates with the proteasome. 11S REG-gamma activates preferentially the trypsin-like catalytic subunit of the proteasome. May also be involved in cell cycle regulation. The polypeptide is Proteasome activator 28 (psmE3) (Dictyostelium discoideum (Social amoeba)).